Reading from the N-terminus, the 354-residue chain is NADH-quinone oxidoreductase subunit H (354 aa).

The next 10 helical transmembrane spans lie at 12-32, 62-82, 89-109, 124-144, 162-182, 203-223, 239-259, 263-283, 291-311, and 326-346; these read LLGG…LIAP, PWGL…EIIL, GLFL…WVVV, LLFL…AGWA, VSYE…SGTL, FLSW…ISGL, EIVA…FFLA, NMIL…LPPI, IPGW…FLWV, and LGWK…GLWI.

It belongs to the complex I subunit 1 family. In terms of assembly, NDH-1 is composed of 14 different subunits. Subunits NuoA, H, J, K, L, M, N constitute the membrane sector of the complex.

The protein resides in the cell inner membrane. The enzyme catalyses a quinone + NADH + 5 H(+)(in) = a quinol + NAD(+) + 4 H(+)(out). NDH-1 shuttles electrons from NADH, via FMN and iron-sulfur (Fe-S) centers, to quinones in the respiratory chain. The immediate electron acceptor for the enzyme in this species is believed to be ubiquinone. Couples the redox reaction to proton translocation (for every two electrons transferred, four hydrogen ions are translocated across the cytoplasmic membrane), and thus conserves the redox energy in a proton gradient. This subunit may bind ubiquinone. The polypeptide is NADH-quinone oxidoreductase subunit H (Methylibium petroleiphilum (strain ATCC BAA-1232 / LMG 22953 / PM1)).